The chain runs to 368 residues: Isopentenyl-diphosphate delta-isomerase (368 aa).

7–8 contributes to the substrate binding site; sequence RK. FMN contacts are provided by residues Thr65, 66–68, Ser96, and Asn125; that span reads GMT. 96-98 contacts substrate; sequence SQR. Gln160 provides a ligand contact to substrate. Glu161 is a binding site for Mg(2+). FMN is bound by residues Lys193, Ser218, Thr223, 275 to 277, and 296 to 297; these read GIR and AL.

Belongs to the IPP isomerase type 2 family. Homooctamer. Dimer of tetramers. The cofactor is FMN. NADPH is required as a cofactor. It depends on Mg(2+) as a cofactor.

It is found in the cytoplasm. It carries out the reaction isopentenyl diphosphate = dimethylallyl diphosphate. Involved in the biosynthesis of isoprenoids. Catalyzes the 1,3-allylic rearrangement of the homoallylic substrate isopentenyl (IPP) to its allylic isomer, dimethylallyl diphosphate (DMAPP). The sequence is that of Isopentenyl-diphosphate delta-isomerase from Saccharolobus islandicus (strain L.S.2.15 / Lassen #1) (Sulfolobus islandicus).